We begin with the raw amino-acid sequence, 760 residues long: Translocation protein SEC63 homolog (760 aa).

Residues 1–14 lie on the Lumenal side of the membrane; it reads MAGQQFQYDDSGNT. A helical transmembrane segment spans residues 15 to 35; it reads FFYFLTSFVGLIVIPATYYLW. The Cytoplasmic segment spans residues 36 to 69; sequence PRDQNAEQIRLKNIRKVYGRCMWYRLRLLKPQPN. The helical transmembrane segment at 70-90 threads the bilayer; sequence IIPTVKKIVLLAGWALFLFLA. Over 91 to 188 the chain is Lumenal; the sequence is YKVSKTDREY…LPAWIVDQKN (98 aa). One can recognise a J domain in the interval 104-165; that stretch reads NPYEVLNLDP…ESRKNWEEFG (62 aa). The helical transmembrane segment at 189–209 threads the bilayer; the sequence is SILVLLVYGLAFMVILPVVVG. The SEC63 1 domain maps to 197-541; sequence GLAFMVILPV…LKKKPTPVLL (345 aa). At 210 to 760 the chain is on the cytoplasmic side; sequence SWWYRSIRYS…EEEEEEEDDD (551 aa). The disordered stretch occupies residues 492–617; that stretch reads AEEQPAEDGQ…DDEAEWQELQ (126 aa). Over residues 518-536 the composition is skewed to basic residues; the sequence is KGPKKTAKSKKKKPLKKKP. Threonine 537 carries the phosphothreonine modification. Basic and acidic residues predominate over residues 582 to 608; it reads NRDSQSEKDDGSDRDSDREQDEKQNKD. Residues 597-635 are a coiled coil; the sequence is SDREQDEKQNKDDEAEWQELQQSIQRKERALLETKSKIT. One can recognise an SEC63 2 domain in the interval 637–714; the sequence is PVYSLYFPEE…GLDQIKPLKL (78 aa). The interval 720–760 is disordered; the sequence is KPVPENHPQWDTAIEGDEDQEDSEGFEDSFEEEEEEEEDDD. A compositionally biased stretch (acidic residues) spans 733–760; sequence IEGDEDQEDSEGFEDSFEEEEEEEEDDD. Phosphoserine occurs at positions 742 and 748.

As to quaternary structure, the ER translocon complex consists of channel-forming core components SEC61A1, SEC61B and SEC61G and different auxiliary components such as SEC62 and SEC63. As to expression, widely expressed, with high levels in the liver.

It localises to the endoplasmic reticulum membrane. Functionally, mediates cotranslational and post-translational transport of certain precursor polypeptides across endoplasmic reticulum (ER). Proposed to play an auxiliary role in recognition of precursors with short and apolar signal peptides. May cooperate with SEC62 and HSPA5/BiP to facilitate targeting of small presecretory proteins into the SEC61 channel-forming translocon complex, triggering channel opening for polypeptide translocation to the ER lumen. Required for efficient PKD1/Polycystin-1 biogenesis and trafficking to the plasma membrane of the primary cilia. This is Translocation protein SEC63 homolog from Homo sapiens (Human).